The primary structure comprises 120 residues: NAD(P)H-quinone oxidoreductase subunit 3, chloroplastic (120 aa).

3 consecutive transmembrane segments (helical) span residues 9–29 (IFWAFLLISSAIPVLAFLISG), 64–84 (MFALVFVVFDVETVFLYPWAM), and 88–108 (VLGVSAFIEAFIFVLILILGL).

This sequence belongs to the complex I subunit 3 family. NDH is composed of at least 16 different subunits, 5 of which are encoded in the nucleus.

It localises to the plastid. It is found in the chloroplast thylakoid membrane. The catalysed reaction is a plastoquinone + NADH + (n+1) H(+)(in) = a plastoquinol + NAD(+) + n H(+)(out). The enzyme catalyses a plastoquinone + NADPH + (n+1) H(+)(in) = a plastoquinol + NADP(+) + n H(+)(out). NDH shuttles electrons from NAD(P)H:plastoquinone, via FMN and iron-sulfur (Fe-S) centers, to quinones in the photosynthetic chain and possibly in a chloroplast respiratory chain. The immediate electron acceptor for the enzyme in this species is believed to be plastoquinone. Couples the redox reaction to proton translocation, and thus conserves the redox energy in a proton gradient. This Arabidopsis thaliana (Mouse-ear cress) protein is NAD(P)H-quinone oxidoreductase subunit 3, chloroplastic.